The following is a 432-amino-acid chain: uncharacterized protein (432 aa).

A run of 13 helical transmembrane segments spans residues 7–27 (FIGL…PDIY), 29–49 (GIVI…PLPV), 68–88 (EALT…FMLA), 124–144 (FLSM…IALG), 156–176 (FLLL…IIGS), 196–216 (VGFP…YIYF), 241–261 (LVIF…SEIF), 266–286 (FDSV…LVEV), 291–311 (KIDW…GVIV), 326–346 (ILGN…TIIL), 358–378 (IIVP…LILA), 379–399 (VGMS…NAIV), and 412–432 (IGMI…ILYL).

The protein belongs to the CitM (TC 2.A.11) transporter family.

The protein resides in the cell membrane. This is an uncharacterized protein from Methanocaldococcus jannaschii (strain ATCC 43067 / DSM 2661 / JAL-1 / JCM 10045 / NBRC 100440) (Methanococcus jannaschii).